A 177-amino-acid chain; its full sequence is Peptide methionine sulfoxide reductase MsrA (177 aa).

The active site involves Cys15.

This sequence belongs to the MsrA Met sulfoxide reductase family.

The enzyme catalyses L-methionyl-[protein] + [thioredoxin]-disulfide + H2O = L-methionyl-(S)-S-oxide-[protein] + [thioredoxin]-dithiol. It catalyses the reaction [thioredoxin]-disulfide + L-methionine + H2O = L-methionine (S)-S-oxide + [thioredoxin]-dithiol. Functionally, has an important function as a repair enzyme for proteins that have been inactivated by oxidation. Catalyzes the reversible oxidation-reduction of methionine sulfoxide in proteins to methionine. The polypeptide is Peptide methionine sulfoxide reductase MsrA (Listeria innocua serovar 6a (strain ATCC BAA-680 / CLIP 11262)).